A 152-amino-acid polypeptide reads, in one-letter code: Cysteine and tyrosine-rich protein 1 (152 aa).

The N-terminal stretch at 1–27 is a signal peptide; the sequence is MDIPRSLRHPEILLVLLLSEITDICQA. Over 28–59 the chain is Extracellular; the sequence is YCEADCKSYCCDGTPPYCCSYYAYIGNVLSGT. The helical transmembrane segment at 60–80 threads the bilayer; sequence AIAGIVFGIVFIMGVIAGIAI. The Cytoplasmic segment spans residues 81-152; the sequence is CICMCMKSSR…PPPYPGPSRK (72 aa). The interval 130 to 152 is disordered; sequence PYTPTPPMSHYPSPPPYPGPSRK.

This sequence belongs to the CYYR1 family.

The protein localises to the membrane. In Xenopus laevis (African clawed frog), this protein is Cysteine and tyrosine-rich protein 1 (cyyr1).